Here is a 1019-residue protein sequence, read N- to C-terminus: DNA topoisomerase 1 (1019 aa).

Residues 1-160 (MNSIQVKNEP…KTMSITGSGE (160 aa)) are disordered. Positions 46 to 56 (KPLAKRPKVED) are enriched in basic and acidic residues. Over residues 62–78 (PLTSTVSSQNGVQKRSG) the composition is skewed to polar residues. Composition is skewed to acidic residues over residues 83–93 (DDNDDDSDSDS) and 107–136 (SDDDEDDDDDDDEGDDDDEEDDDDDDDDDD). 3 interaction with DNA regions span residues 379–380 (KY), 442–447 (RAGNEK), and 556–558 (SAK). Positions 386 to 860 (TSNFKTNSDR…KKVKKEEEEN (475 aa)) constitute a Topo IB-type catalytic domain. A disordered region spans residues 716-737 (EQKGLTGDDGTPKKGKKAKNVE). Tyr-822 acts as the O-(3'-phospho-DNA)-tyrosine intermediate in catalysis. 2 disordered regions span residues 843–890 (GQGK…TGDS) and 940–1019 (MRKL…AAVV). Positions 854 to 863 (KKEEEENDIK) are enriched in basic and acidic residues. Residues 864 to 879 (PKKKDAKGAASKKRAA) are compositionally biased toward basic residues. Basic and acidic residues-rich tracts occupy residues 940–950 (MRKLDSAERKG) and 980–996 (TSADRKMSKPIKAVDKT). Residues 997 to 1012 (EESDDDLSSDSSDDED) show a composition bias toward acidic residues.

The protein belongs to the type IB topoisomerase family. As to quaternary structure, monomer.

It catalyses the reaction ATP-independent breakage of single-stranded DNA, followed by passage and rejoining.. Its function is as follows. Releases the supercoiling and torsional tension of DNA introduced during the DNA replication and transcription by transiently cleaving and rejoining one strand of the DNA duplex. Introduces a single-strand break via transesterification at a target site in duplex DNA. The scissile phosphodiester is attacked by the catalytic tyrosine of the enzyme, resulting in the formation of a DNA-(3'-phosphotyrosyl)-enzyme intermediate and the expulsion of a 5'-OH DNA strand. The free DNA strand then rotates around the intact phosphodiester bond on the opposing strand, thus removing DNA supercoils. Finally, in the religation step, the DNA 5'-OH attacks the covalent intermediate to expel the active-site tyrosine and restore the DNA phosphodiester backbone. The protein is DNA topoisomerase 1 (TOP1) of Mycosarcoma maydis (Corn smut fungus).